We begin with the raw amino-acid sequence, 231 residues long: 2-C-methyl-D-erythritol 4-phosphate cytidylyltransferase (231 aa).

The protein belongs to the IspD/TarI cytidylyltransferase family. IspD subfamily.

The enzyme catalyses 2-C-methyl-D-erythritol 4-phosphate + CTP + H(+) = 4-CDP-2-C-methyl-D-erythritol + diphosphate. Its pathway is isoprenoid biosynthesis; isopentenyl diphosphate biosynthesis via DXP pathway; isopentenyl diphosphate from 1-deoxy-D-xylulose 5-phosphate: step 2/6. Functionally, catalyzes the formation of 4-diphosphocytidyl-2-C-methyl-D-erythritol from CTP and 2-C-methyl-D-erythritol 4-phosphate (MEP). The sequence is that of 2-C-methyl-D-erythritol 4-phosphate cytidylyltransferase from Xylella fastidiosa (strain M23).